Here is a 623-residue protein sequence, read N- to C-terminus: Protein EDS1 (623 aa).

Residue A2 is modified to N-acetylalanine. Catalysis depends on S123, which acts as the Nucleophile. Residues D187 and H317 each act as charge relay system in the active site. The stretch at 358–383 forms a coiled coil; sequence VQAALEEEKKRVENQKKIIQVIEQER.

In terms of assembly, homodimer. Interacts with RPS4, RPS6, SNC1, SRFR1, AvrRps4 and HopA1. Part of a nuclear complex made of EDS1, PAD4 and SAG101, that can be redirected to the cytoplasm in the presence of an extranuclear form of EDS1. Interacts (via N-terminus) with PAD4 (via N-terminus). Interacts (via N-terminus) with SAG101. EDS1-SAG101 and EDS1-PAD4 form separate complexes in pathogen-unchallenged cells. Part of a nuclear protein complex made of VICTR, PAD4 and EDS1. Interacts with VICTR.

The protein localises to the nucleus. Its subcellular location is the cytoplasm. The protein resides in the microsome. Functionally, positive regulator of basal resistance and of effector-triggered immunity specifically mediated by TIR-NB-LRR (TNL) resistance proteins. Disruption by bacterial effector of EDS1-TIR-NB-LRR resistance protein interactions constitutes the first step in resistance activation. Acts redundantly with salicylic acid to regulate resistance gene-mediated signaling. Triggers early plant defenses and hypersensitive response independently of PAD4, and then recruits PAD4 to potentiate plant defenses through the accumulation of salicylic acid. Nuclear localization is essential for basal and TNL-conditioned immunity and for reprogramming defense gene expression, while cytoplasmic EDS1 is required to induce a complete immune response. Heterodimerization with PAD4 and/or SGA101 is necessary for TNL-mediated effector-triggered immunity. Contributes to nonhost resistance against E.amylovora. Loss of EDS1-PAD4 interaction compromises basal but not TNL-triggered resistance. Necessary for systemic acquired resistance (SAR) signal generation and perception. Has no direct lipase activity. Putative lipase activity is dispensable for immune functions. In Arabidopsis thaliana (Mouse-ear cress), this protein is Protein EDS1.